The following is a 294-amino-acid chain: tRNA dimethylallyltransferase (294 aa).

Gly-10–Thr-17 is a binding site for ATP. Substrate is bound at residue Thr-12 to Thr-17. Positions Asp-35–Gln-38 are interaction with substrate tRNA.

The protein belongs to the IPP transferase family. In terms of assembly, monomer. Mg(2+) is required as a cofactor.

It catalyses the reaction adenosine(37) in tRNA + dimethylallyl diphosphate = N(6)-dimethylallyladenosine(37) in tRNA + diphosphate. Functionally, catalyzes the transfer of a dimethylallyl group onto the adenine at position 37 in tRNAs that read codons beginning with uridine, leading to the formation of N6-(dimethylallyl)adenosine (i(6)A). This is tRNA dimethylallyltransferase from Streptococcus suis (strain 05ZYH33).